The chain runs to 687 residues: Pentatricopeptide repeat-containing protein At3g09060 (687 aa).

18 PPR repeats span residues 42-76, 77-107, 113-147, 148-182, 183-217, 218-253, 254-288, 289-323, 324-358, 359-392, 393-427, 428-462, 463-497, 498-532, 533-567, 568-602, 603-637, and 638-672; these read SAVV…ECKC, DEDV…MREI, AIRS…GVAP, NLQT…GFKP, DVFS…GVAP, DVTC…SVYP, NVKT…EREK, DLYT…KASI, DVVT…NSVN, IVSY…GYAA, DKTT…GGHL, DVYA…GVEL, NSHV…GCRP, TVVS…GWKP, DLKT…GLET, DVMM…NCTA, NLVT…GLQP, and DIIS…GIFP.

This sequence belongs to the PPR family. P subfamily.

This is Pentatricopeptide repeat-containing protein At3g09060 from Arabidopsis thaliana (Mouse-ear cress).